A 66-amino-acid chain; its full sequence is Large ribosomal subunit protein bL35 (66 aa).

2 stretches are compositionally biased toward basic residues: residues 1–15 and 24–40; these read MPKL…KRFK and HAQR…TKKQ. The segment at 1-40 is disordered; that stretch reads MPKLKTKSGAKKRFKVTGTGKVMHAQRGKRHGMIKRTKKQ.

Belongs to the bacterial ribosomal protein bL35 family.

In Bradyrhizobium sp. (strain ORS 278), this protein is Large ribosomal subunit protein bL35.